The following is a 905-amino-acid chain: Nitrate reductase [NADPH] (905 aa).

Residues 1 to 42 (METSTTTTLLQQERIPENSEPISTHIHTHSLPPTPPGTAKPS) are disordered. Residue cysteine 179 coordinates Mo-molybdopterin. Positions 546–621 (NRKITIEELK…LPTYHIGTLD (76 aa)) constitute a Cytochrome b5 heme-binding domain. Positions 581 and 604 each coordinate heme. Residues 648 to 759 (KTWSKAILDK…KGPTGKFVYH (112 aa)) enclose the FAD-binding FR-type domain. Residues 702 to 705 (RSYT), 719 to 723 (LIKIY), 733 to 735 (VMT), serine 783, and threonine 786 contribute to the FAD site. 875-884 (LLLVCGPPPM) contacts NADP(+).

Belongs to the nitrate reductase family. Homodimer. FAD serves as cofactor. Heme is required as a cofactor. It depends on Mo-molybdopterin as a cofactor.

It carries out the reaction nitrite + NADP(+) + H2O = nitrate + NADPH + H(+). Functionally, nitrate reductase is a key enzyme involved in the first step of nitrate assimilation in plants, fungi and bacteria. The chain is Nitrate reductase [NADPH] (NIA) from Fusarium oxysporum (Fusarium vascular wilt).